Reading from the N-terminus, the 467-residue chain is MLKIYSSLSQQKEEFKPIQAGKVGIYVCGMTVYDYCHLGHARVLVCFDIITRYLRAKGYDVNYVRNITDVDDKILNRARDNGESVDALTARFIDAMHEDERALGVLSPTSEPRATGHIDEIIAMIQRLMDKGYAYHASNGDVYYSVEQFADYGKLSKQKLDEIRAGARIEVDAEKRSPADFVLWKAAKPGELSWDSPWGEGRPGWHIECSAMSTRCLGDTFDIHGGGPDLKFPHHENEIAQSEAATGCKYVNYWMHAGAVRVNKEKMSKSLGNFFTIREILDKYPAEVVRYFLASSHYRSAIDYSDVALEEARSGLERLYNSIRELYGELGAVSMDEPLVGEYRERFHQAMDDDFNTSSAVAVLFDMAKAVNVAKKEDRTRALSLAKGMVDLAEVLGLLQADPESLMQGEGEEVGGLSVAEIEDFIAQRNAARANKDFAESDRIRDLLKEKGVLLNDSREGTSWQRA.

C28 serves as a coordination point for Zn(2+). Residues 30–40 (MTVYDYCHLGH) carry the 'HIGH' region motif. Residues C209, H234, and E238 each coordinate Zn(2+). The short motif at 266-270 (KMSKS) is the 'KMSKS' region element. K269 provides a ligand contact to ATP.

The protein belongs to the class-I aminoacyl-tRNA synthetase family. In terms of assembly, monomer. Zn(2+) serves as cofactor.

The protein resides in the cytoplasm. The enzyme catalyses tRNA(Cys) + L-cysteine + ATP = L-cysteinyl-tRNA(Cys) + AMP + diphosphate. The sequence is that of Cysteine--tRNA ligase from Hahella chejuensis (strain KCTC 2396).